The chain runs to 341 residues: MFVDKTLMITGGTGSFGNAVLSRFLKSNIINDIKEIRIFSRDEKKQEDMRIALNNSKLKFYIGDVRNYQSIDDAMHGVDYVFHAAALKQVPTCEFYPMEAINTNVLGAENVLSAAINNKVTKVIVLSTDKAVYPINAMGLSKALMEKLAIAKARMRSPGETILCVTRYGNVMASRGSVIPLFIHQIKQGKELTITEPSMTRFLMSLVDSVDLVLYAFEHGRQGDIFVQKSPASTIEVLAKALQEIFGSKNAIRFIGTRHGEKHYESLVSSEDMAKADDLGGYYRIPMDGRDLNYAKYFVTGEKKVALLDDYTSHNTKRLNLKEVKELLLTLDYVQKELKNA.

The protein belongs to the polysaccharide synthase family.

The enzyme catalyses UDP-alpha-D-glucose = UDP-alpha-D-galactose. In terms of biological role, epimerizes UDP-galactose to UDP-glucose. May contribute to formation of LPS or the exopolysaccharide slime layer by providing UDP-galactose as a substrate for either molecule. In Rickettsia prowazekii (strain Madrid E), this protein is UDP-glucose 4-epimerase (capD).